The sequence spans 184 residues: MKVIAVTGYKPFELGIFKNDHPGVECIKKALRRKLTAFVEGGLEWVIISGQLGVELWTAEVVFEIQVEYPDLKLAVFTPFLEQEEGWKEDNREYYEFILSQADHVDSITKRKYESPEQFKLKNQIFIEKSDALLAVYDEEKPGSPKYIVEAAKKKGEIENYHSYFILFSDLQDIIEEEQWNNAE.

It belongs to the UPF0398 family.

This Bacillus anthracis (strain A0248) protein is UPF0398 protein BAA_1648.